Consider the following 436-residue polypeptide: uncharacterized protein (436 aa).

This is an uncharacterized protein from Treponema pallidum (strain Nichols).